Reading from the N-terminus, the 45-residue chain is Mu-conotoxin-like Cal 12.1.2g (45 aa).

Cystine bridges form between Cys3–Cys16, Cys11–Cys28, Cys18–Cys33, and Cys27–Cys39. Position 23 is a 4-hydroxyproline (Pro23). Residues Trp37 and Trp38 each carry the 6'-bromotryptophan modification. Pro40 carries the 4-hydroxyproline modification.

In terms of tissue distribution, expressed by the venom duct.

It localises to the secreted. Functionally, mu-conotoxins block voltage-gated sodium channels. This toxin reversibly blocks voltage-gated sodium channel in cephalopods, with no alteration in the voltage dependence of sodium conductance or on the kinetics of inactivation. The sequence is that of Mu-conotoxin-like Cal 12.1.2g from Californiconus californicus (California cone).